The sequence spans 244 residues: Tyrosine recombinase XerD-like (244 aa).

The region spanning 1–73 (MRDRISAFLE…ACNQFLYFLY (73 aa)) is the Core-binding (CB) domain. The Tyr recombinase domain maps to 90 to 244 (AEKKTEKPEI…KTVLTLEKYR (155 aa)). Residues Lys150 and Arg211 contribute to the active site. Catalysis depends on Tyr243, which acts as the O-(3'-phospho-DNA)-tyrosine intermediate.

It belongs to the 'phage' integrase family. XerD-like subfamily.

The protein resides in the cytoplasm. In terms of biological role, putative tyrosine recombinase. Not involved in the cutting and rejoining of the recombining DNA molecules on dif(SL) site. The chain is Tyrosine recombinase XerD-like from Streptococcus pneumoniae (strain CGSP14).